A 434-amino-acid polypeptide reads, in one-letter code: Enolase (434 aa).

Alanine 41 is a phosphoenolpyruvate binding site. Glutamine 165 contacts (2R)-2-phosphoglycerate. The active-site Proton donor is glutamate 207. Residues aspartate 244, glutamate 291, and aspartate 318 each contribute to the Mg(2+) site. Residues lysine 343, arginine 372, serine 373, and lysine 394 each contribute to the phosphoenolpyruvate site. The (2R)-2-phosphoglycerate site is built by lysine 343, arginine 372, serine 373, and lysine 394. The active-site Proton acceptor is lysine 343.

Belongs to the enolase family. Homodimer and homooctamer; the homodimer is inactive. It depends on Mg(2+) as a cofactor.

The protein localises to the cytoplasm. It localises to the secreted. It is found in the cell surface. It catalyses the reaction (2R)-2-phosphoglycerate = phosphoenolpyruvate + H2O. The protein operates within carbohydrate degradation; glycolysis; pyruvate from D-glyceraldehyde 3-phosphate: step 4/5. Its function is as follows. Catalyzes the reversible conversion of 2-phosphoglycerate (2-PG) into phosphoenolpyruvate (PEP). It is essential for the degradation of carbohydrates via glycolysis. 'Moonlights' as a laminin receptor. Binds laminin when expressed on the bacterial cell surface; this probably induces destruction of the extracellular matrix, favoring invasion and dissemination. The sequence is that of Enolase from Staphylococcus aureus.